A 196-amino-acid polypeptide reads, in one-letter code: Sesquiterpene phosphatase astK (196 aa).

This sequence belongs to the HAD-like hydrolase superfamily.

It catalyses the reaction (S,S)-drim-8-en-11-yl phosphate + H2O = (S,S)-drim-8-en-11-ol + phosphate. The protein operates within secondary metabolite biosynthesis; terpenoid biosynthesis. Functionally, sesquiterpene phosphatase; part of the gene cluster that mediates the biosynthesis of astellolides, drimane-type sesquiterpene esters that show antimicrobial, anti-inflammatory, and anti-tumor activities. The first step in astellolide biosynthesis is performed by the sesquiterpene cyclase astC that catalyzes the formation of drimanyl pyrophosphate from farnesyl pyrophosphate. Drimanyl pyrophosphate is then dephosphorylated by the sesquiterpene phosphatase astI to produce drimanyl monophosphate which is further dephosphorylated to drim-8-ene-11-ol by atsK. Drim-8-ene-11-ol is converted to confertifolin, probably by the cytochrome P450 monooxygenase astD and/or the dehydrogenase astE. The cytochrome P450 monooxygenases astB, astF and astJ then hydroxylate confertifolin at C6, C14, or C15 to form trihydroxy confertifolin. The nonribosomal peptide synthetase astA catalyzes ester bond formation between trihydroxy contifolin and benzoic acid (BA) or 4-hydroxy benzoic acid (4HBA), leading to the formation of dideacetyl astellolides A and B, respectively. Finally, the O-acetyltransferase astG converts dideacetyl astellolides A and B into deacetyl astellolides A and B. The polypeptide is Sesquiterpene phosphatase astK (Aspergillus oryzae (strain ATCC 42149 / RIB 40) (Yellow koji mold)).